The sequence spans 311 residues: Porphobilinogen deaminase (311 aa).

At C240 the chain carries S-(dipyrrolylmethanemethyl)cysteine.

The protein belongs to the HMBS family. In terms of assembly, monomer. Requires dipyrromethane as cofactor.

The enzyme catalyses 4 porphobilinogen + H2O = hydroxymethylbilane + 4 NH4(+). It functions in the pathway porphyrin-containing compound metabolism; protoporphyrin-IX biosynthesis; coproporphyrinogen-III from 5-aminolevulinate: step 2/4. Tetrapolymerization of the monopyrrole PBG into the hydroxymethylbilane pre-uroporphyrinogen in several discrete steps. The sequence is that of Porphobilinogen deaminase from Natranaerobius thermophilus (strain ATCC BAA-1301 / DSM 18059 / JW/NM-WN-LF).